The chain runs to 302 residues: Putative S-adenosyl-L-methionine-dependent methyltransferase MAP_1622c (302 aa).

S-adenosyl-L-methionine contacts are provided by residues D129 and 158–159; that span reads DL.

It belongs to the UPF0677 family.

Exhibits S-adenosyl-L-methionine-dependent methyltransferase activity. This is Putative S-adenosyl-L-methionine-dependent methyltransferase MAP_1622c from Mycolicibacterium paratuberculosis (strain ATCC BAA-968 / K-10) (Mycobacterium paratuberculosis).